The chain runs to 577 residues: MAEAGSGFLEQLKSCIVWSWTYLWTVWFFLVLFLVYILRVPLRINDNLSTVSMFLNTLTPKFYVALTGTSSLISGLILIFEWWYFRKYGTSFIEQVSVSHLRPLLGGVDNNSSNNSNSSNGDSDSNRQSVSECKVWRNPLNLFRGAEYNRYTWVTGREPLTYYDMNLSAQDHQTFFTCDSDHLRPADAIMQKAWRERNPQARISAAHEALEINEIRSRVEVPLIASSTIWEIKLLPKCATAYILLAEEEATTIAEAEKLFKQALKAGDGCYRRSQQLQHHGSQYEAQHRRDTNVLVYIKRRLAMCARRLGRTREAVKMMRDLMKEFPLLSMFNIHENLLEALLELQAYADVQAVLAKYDDISLPKSATICYTAALLKARAVSDKFSPEAASRRGLSTAEMNAVEAIHRAVEFNPHVPKYLLEMKSLILPPEHILKRGDSEAIAYAFFHLAHWKRVEGALNLLHCTWEGTFRMIPYPLEKGHLFYPYPICTETADRELLPSFHEVSVYPKKELPFFILFTAGLCSFTAMLALLTHQFPELMGVFAKAFLSTLFAPLNFVMEKVESILPSSLWHQLTRI.

The chain crosses the membrane as a helical span at residues 15-35; the sequence is CIVWSWTYLWTVWFFLVLFLV. The N-linked (GlcNAc...) asparagine glycan is linked to asparagine 47. Residues 62-82 traverse the membrane as a helical segment; it reads FYVALTGTSSLISGLILIFEW. The residue at position 386 (serine 386) is a Phosphoserine. 2 helical membrane passes run 512 to 532 and 539 to 559; these read LPFF…LALL and LMGV…NFVM.

It belongs to the ST7 family.

Its subcellular location is the membrane. The sequence is that of Suppressor of tumorigenicity 7 protein (St7) from Rattus norvegicus (Rat).